A 908-amino-acid polypeptide reads, in one-letter code: Bifunctional uridylyltransferase/uridylyl-removing enzyme (908 aa).

A uridylyltransferase region spans residues 1–360 (MFDTPAVFAR…LERIFRRRRR (360 aa)). Residues 361–718 (IKQGYKVVRG…LDPDEDRDAT (358 aa)) form a uridylyl-removing region. Positions 477–599 (VDEHTIQTIV…VQTTKRLDLL (123 aa)) constitute an HD domain. ACT domains lie at 719-801 (RACF…LKSR) and 829-904 (IIEV…GAER).

The protein belongs to the GlnD family. The cofactor is Mg(2+).

The enzyme catalyses [protein-PII]-L-tyrosine + UTP = [protein-PII]-uridylyl-L-tyrosine + diphosphate. It carries out the reaction [protein-PII]-uridylyl-L-tyrosine + H2O = [protein-PII]-L-tyrosine + UMP + H(+). Uridylyltransferase (UTase) activity is inhibited by glutamine, while glutamine activates uridylyl-removing (UR) activity. In terms of biological role, modifies, by uridylylation and deuridylylation, the PII regulatory proteins (GlnB and homologs), in response to the nitrogen status of the cell that GlnD senses through the glutamine level. Under low glutamine levels, catalyzes the conversion of the PII proteins and UTP to PII-UMP and PPi, while under higher glutamine levels, GlnD hydrolyzes PII-UMP to PII and UMP (deuridylylation). Thus, controls uridylylation state and activity of the PII proteins, and plays an important role in the regulation of nitrogen assimilation and metabolism. This chain is Bifunctional uridylyltransferase/uridylyl-removing enzyme, found in Ruegeria pomeroyi (strain ATCC 700808 / DSM 15171 / DSS-3) (Silicibacter pomeroyi).